The chain runs to 561 residues: DNA mismatch repair protein MutL (561 aa).

It belongs to the DNA mismatch repair MutL/HexB family.

Its function is as follows. This protein is involved in the repair of mismatches in DNA. It is required for dam-dependent methyl-directed DNA mismatch repair. May act as a 'molecular matchmaker', a protein that promotes the formation of a stable complex between two or more DNA-binding proteins in an ATP-dependent manner without itself being part of a final effector complex. In Rippkaea orientalis (strain PCC 8801 / RF-1) (Cyanothece sp. (strain PCC 8801)), this protein is DNA mismatch repair protein MutL.